Reading from the N-terminus, the 90-residue chain is Mitochondrial import inner membrane translocase subunit tim9 (90 aa).

The short motif at 35-59 is the Twin CX3C motif element; the sequence is CFDNCVNDFTTKSLISREEGCIMRC. Intrachain disulfides connect cysteine 35–cysteine 59 and cysteine 39–cysteine 55.

Belongs to the small Tim family. Heterohexamer; composed of 3 copies of TIM9 and 3 copies of TIM10, named soluble 70 kDa complex. Associates with the TIM22 complex, whose core is composed of TIM22 and TIM54. Interacts with the transmembrane regions of multi-pass transmembrane proteins in transit.

The protein localises to the mitochondrion inner membrane. Its function is as follows. Mitochondrial intermembrane chaperone that participates in the import and insertion of multi-pass transmembrane proteins into the mitochondrial inner membrane. Also required for the transfer of beta-barrel precursors from the TOM complex to the sorting and assembly machinery (SAM complex) of the outer membrane. Acts as a chaperone-like protein that protects the hydrophobic precursors from aggregation and guide them through the mitochondrial intermembrane space. The sequence is that of Mitochondrial import inner membrane translocase subunit tim9 (tim9) from Aspergillus fumigatus (strain ATCC MYA-4609 / CBS 101355 / FGSC A1100 / Af293) (Neosartorya fumigata).